The sequence spans 165 residues: ATP synthase subunit b (165 aa).

Residues 5–25 (LVGITWEFVFQIVNTFIIFLL) form a helical membrane-spanning segment.

Belongs to the ATPase B chain family. F-type ATPases have 2 components, F(1) - the catalytic core - and F(0) - the membrane proton channel. F(1) has five subunits: alpha(3), beta(3), gamma(1), delta(1), epsilon(1). F(0) has three main subunits: a(1), b(2) and c(10-14). The alpha and beta chains form an alternating ring which encloses part of the gamma chain. F(1) is attached to F(0) by a central stalk formed by the gamma and epsilon chains, while a peripheral stalk is formed by the delta and b chains.

Its subcellular location is the cell membrane. Functionally, f(1)F(0) ATP synthase produces ATP from ADP in the presence of a proton or sodium gradient. F-type ATPases consist of two structural domains, F(1) containing the extramembraneous catalytic core and F(0) containing the membrane proton channel, linked together by a central stalk and a peripheral stalk. During catalysis, ATP synthesis in the catalytic domain of F(1) is coupled via a rotary mechanism of the central stalk subunits to proton translocation. Its function is as follows. Component of the F(0) channel, it forms part of the peripheral stalk, linking F(1) to F(0). This Clostridioides difficile (strain 630) (Peptoclostridium difficile) protein is ATP synthase subunit b.